The sequence spans 1239 residues: Anion exchange protein 2 (1239 aa).

A disordered region spans residues 1-237 (MSSAPRRPAK…HRSYNLQERR (237 aa)). The Cytoplasmic segment spans residues 1-706 (MSSAPRRPAK…DFRDALDPQC (706 aa)). 2 stretches are compositionally biased toward basic and acidic residues: residues 37-49 (ELHRTLGVERFEE) and 58-75 (GGEEPGRSYGEEDFEYHR). Composition is skewed to basic residues over residues 76-85 (QSSHHIHHPL) and 94-110 (RRRKTPQGPGRKPRRRP). 5 positions are modified to phosphoserine: serine 113, serine 132, serine 144, serine 170, and serine 172. Acidic residues predominate over residues 120–133 (TIEEGEEDEDEASE). Low complexity predominate over residues 141-155 (TQPSPVSTPSSVQFF). Low complexity predominate over residues 189-207 (GAQAGTQVEEAEAVAVASG). The segment covering 208–217 (TAGGDDGGAS) has biased composition (gly residues). Serine 241 is modified (phosphoserine). Threonine 255 is subject to Phosphothreonine. Lysine 272 bears the N6-methyllysine mark. The interval 285–318 (HLVRKNAKGSTQSGREGREPGPTPRARPRAPHKP) is disordered. Serine 441 is modified (phosphoserine). The tract at residues 447 to 468 (SLLGHHHGQGAESDPHVTEPLI) is disordered. Membrane (anion exchange) regions lie at residues 706–1239 (CLAA…PMPV) and 708–1239 (AAVI…PMPV). Transmembrane regions (helical) follow at residues 707 to 727 (LAAVIFIYFAALSPAITFGGL), 752 to 772 (FCLLGAQPLLVIGFSGPLLVF), 794 to 814 (IGFWLVLLALLMVALEGSFLV), and 824 to 844 (IFAFLISLIFIYETFYKLVKI). At 845 to 895 (FQEHPLHGCSASNSSEVDGGENMTWAVARPTLGPGNRSLAGQSGQGKPRGQ) the chain is on the extracellular side. Asparagine 857, asparagine 866, and asparagine 880 each carry an N-linked (GlcNAc...) asparagine glycan. Residues 896–916 (PNTALLSLVLMAGTFFIAFFL) traverse the membrane as a helical segment. The Cytoplasmic portion of the chain corresponds to 917 to 931 (RKFKNSRFFPGRIRR). Helical transmembrane passes span 932–952 (VIGDFGVPIAILIMVLVDYSI), 987–1007 (FPVWMMVASLLPAILVFILIF), 1034–1054 (LLLIVAMGGICALFGLPWLAA), 1088–1108 (RVTGLLVALLVGLSIVIGDLL), and 1111–1131 (IPLAVLFGIFLYMGVTSLNGI). Cysteine 1171 carries the S-palmitoyl cysteine lipid modification. Residues 1172–1192 (LALLWAVMSTAASLAFPFILI) traverse the membrane as a helical segment.

The protein belongs to the anion exchanger (TC 2.A.31) family.

It is found in the apical cell membrane. The protein resides in the basolateral cell membrane. The enzyme catalyses hydrogencarbonate(in) + chloride(out) = hydrogencarbonate(out) + chloride(in). Sodium-independent anion exchanger which mediates the electroneutral exchange of chloride for bicarbonate ions across the cell membrane. Plays an important role in osteoclast differentiation and function. Regulates bone resorption and calpain-dependent actin cytoskeleton organization in osteoclasts via anion exchange-dependent control of pH. Essential for intracellular pH regulation in CD8(+) T-cells upon CD3 stimulation, modulating CD8(+) T-cell response. In Pongo abelii (Sumatran orangutan), this protein is Anion exchange protein 2 (SLC4A2).